The primary structure comprises 315 residues: High mobility group protein hmg-12 (315 aa).

Residues 57 to 315 (VKNETDSEAV…AIDAFFDGSD (259 aa)) are disordered. Over residues 77 to 86 (ANDSPANTND) the composition is skewed to polar residues. Residues 118 to 128 (PVKKGRGRPIK) constitute a DNA-binding region (a.T hook 1). Composition is skewed to low complexity over residues 147–160 (AQTP…IDTA) and 196–205 (AADTDAIDTA).

Belongs to the HMGA family.

Its subcellular location is the nucleus. Functionally, transcriptional regulator. Binds to specific sequence motifs in regulatory elements. May recruit transcription factors, or may induce structural changes in chromatin, to thereby modulate embryonic expression of ATP-dependent chaperone cdc-48.1. The polypeptide is High mobility group protein hmg-12 (Caenorhabditis elegans).